A 219-amino-acid polypeptide reads, in one-letter code: Suppressor-of-stellate-like protein (219 aa).

The interval 194-219 (SAESPPIKVESSVSKSPSWLRNVPNF) is disordered. The segment covering 204 to 219 (SSVSKSPSWLRNVPNF) has biased composition (polar residues).

The protein belongs to the casein kinase 2 subunit beta family.

The polypeptide is Suppressor-of-stellate-like protein (Ssl) (Drosophila melanogaster (Fruit fly)).